Reading from the N-terminus, the 113-residue chain is Large ribosomal subunit protein bL17 (113 aa).

It belongs to the bacterial ribosomal protein bL17 family. Part of the 50S ribosomal subunit. Contacts protein L32.

In Clostridium botulinum (strain Alaska E43 / Type E3), this protein is Large ribosomal subunit protein bL17.